We begin with the raw amino-acid sequence, 250 residues long: tRNA (guanine-N(1)-)-methyltransferase (250 aa).

S-adenosyl-L-methionine is bound by residues Gly-115 and 135-140; that span reads LGDFVL.

Belongs to the RNA methyltransferase TrmD family. Homodimer.

The protein localises to the cytoplasm. It catalyses the reaction guanosine(37) in tRNA + S-adenosyl-L-methionine = N(1)-methylguanosine(37) in tRNA + S-adenosyl-L-homocysteine + H(+). Specifically methylates guanosine-37 in various tRNAs. The polypeptide is tRNA (guanine-N(1)-)-methyltransferase (Legionella pneumophila (strain Lens)).